The sequence spans 501 residues: Lysine--tRNA ligase (501 aa).

Mg(2+) contacts are provided by Glu-402 and Glu-409.

Belongs to the class-II aminoacyl-tRNA synthetase family. In terms of assembly, homodimer. It depends on Mg(2+) as a cofactor.

It localises to the cytoplasm. The catalysed reaction is tRNA(Lys) + L-lysine + ATP = L-lysyl-tRNA(Lys) + AMP + diphosphate. In Helicobacter pylori (strain Shi470), this protein is Lysine--tRNA ligase.